A 435-amino-acid chain; its full sequence is Adenylosuccinate synthetase (435 aa).

Residues 11 to 17 and 39 to 41 each bind GTP; these read GDEGKGK and GHT. D12 (proton acceptor) is an active-site residue. Residues D12 and G39 each coordinate Mg(2+). IMP is bound by residues 12 to 15, 37 to 40, T128, R142, Q223, T238, and R302; these read DEGK and NAGH. H40 serves as the catalytic Proton donor. A substrate-binding site is contributed by 298 to 304; that stretch reads SVTGRPR. GTP-binding positions include R304, 330–332, and 412–414; these read KLD and STG.

Belongs to the adenylosuccinate synthetase family. As to quaternary structure, homodimer. The cofactor is Mg(2+).

The protein resides in the cytoplasm. The catalysed reaction is IMP + L-aspartate + GTP = N(6)-(1,2-dicarboxyethyl)-AMP + GDP + phosphate + 2 H(+). It participates in purine metabolism; AMP biosynthesis via de novo pathway; AMP from IMP: step 1/2. In terms of biological role, plays an important role in the de novo pathway of purine nucleotide biosynthesis. Catalyzes the first committed step in the biosynthesis of AMP from IMP. The polypeptide is Adenylosuccinate synthetase (Coxiella burnetii (strain Dugway 5J108-111)).